We begin with the raw amino-acid sequence, 145 residues long: U20-hexatoxin-Hi1a (145 aa).

The first 16 residues, 1 to 16, serve as a signal peptide directing secretion; the sequence is MYQFLIIVILAAFVNG. Thyroglobulin type-1 domains follow at residues 20 to 73 and 82 to 145; these read KTEC…GQPM and ACEC…RLEC. Intrachain disulfides connect C23/C45, C56/C63, C85/C106, C117/C124, and C126/C145.

Expressed by the venom gland.

It localises to the secreted. Its function is as follows. Cysteine proteinase inhibitor. The sequence is that of U20-hexatoxin-Hi1a from Hadronyche infensa (Fraser island funnel-web spider).